Here is a 141-residue protein sequence, read N- to C-terminus: Ubiquitin-like protein ATG12 (141 aa).

Residues 1–53 (MSEDSEVVLQLPSAPVGAGGESLPELSPETATPEPPSSAAVSPGTEEPPGDTK) form a disordered region. The segment covering 23–40 (LPELSPETATPEPPSSAA) has biased composition (low complexity). Gly141 is covalently cross-linked (Glycyl lysine isopeptide (Gly-Lys) (interchain with K-? in acceptor protein)).

This sequence belongs to the ATG12 family. Forms a conjugate with ATG5. Part of the minor complex composed of 4 sets of ATG12-ATG5 and ATG16L1 (400 kDa); this complex interacts with ATG3 leading to disruption of ATG7 interaction and promotion of ATG8-like proteins lipidation. Forms an 800-kDa complex composed of ATG12-ATG5 and ATG16L2. Interacts with DHX58/RIG-1, IFIH1/MDA5 and MAVS/IPS-1 in monomeric form as well as in ATG12-ATG5 conjugate. The interaction with MAVS is further enhanced upon vesicular stomatitis virus (VSV) infection. Interacts with ATG3; this interaction is essential for phosphatidylethanolamine (PE)-conjugated ATG8-like proteins formation. Interacts with ATG7. Interacts with ATG10. The ATG12-ATG5 conjugate interacts with RAB33A; this interaction is bridged by ATG16L1 and promotes ATG12-ATG5-ATG16L1 complex recruitment to phagophores. Interacts with TECPR1. Interacts with SH3BGRL. The ATG12-ATG5 conjugate interacts with PDCD6IP (via the BRO1 domain); this interaction is bridged by ATG12 and promotes multiple PDCD6IP-mediated functions such as endolysosomal trafficking, macroautophagy and exosome biogenesis. Acetylated by EP300. In terms of tissue distribution, ubiquitous.

It localises to the cytoplasm. Its subcellular location is the preautophagosomal structure membrane. Functionally, ubiquitin-like protein involved in autophagy vesicles formation. Conjugation with ATG5 through a ubiquitin-like conjugating system involving also ATG7 as an E1-like activating enzyme and ATG10 as an E2-like conjugating enzyme, is essential for its function. The ATG12-ATG5 conjugate acts as an E3-like enzyme which is required for lipidation of ATG8 family proteins and their association to the vesicle membranes. As part of the ATG8 conjugation system with ATG5 and ATG16L1, required for recruitment of LRRK2 to stressed lysosomes and induction of LRRK2 kinase activity in response to lysosomal stress. In terms of biological role, (Microbial infection) May act as a proviral factor. In association with ATG5, negatively regulates the innate antiviral immune response by impairing the type I IFN production pathway upon vesicular stomatitis virus (VSV) infection. The chain is Ubiquitin-like protein ATG12 from Mus musculus (Mouse).